The primary structure comprises 349 residues: KH domain-containing, RNA-binding, signal transduction-associated protein 2 (349 aa).

The KH domain occupies 65 to 135 (LIPVKQYPKF…HLSDELHVLI (71 aa)). Disordered stretches follow at residues 181–263 (SEES…PPPA) and 321–349 (EWAT…YGRY). The span at 218–231 (RGVLTPRGTTVTRG) shows a compositional bias: low complexity. Residues Arg-230 and Arg-240 each carry the omega-N-methylarginine modification. Positions 340–349 (GYREHPYGRY) are enriched in basic and acidic residues.

The protein belongs to the KHDRBS family. As to quaternary structure, self-associates to form homooligomers. Interacts with KHDRBS1/SAM68; heterooligomer formation of KHDRBS family proteins may modulate RNA substrate specificity. Interacts with RBMX, SAFB, SFRS9 and YTHDC1. Interacts with FYN and PLCG1 (via SH3 domain). Interacts (phosphorylated) with FYN, GRB2, PLCG1 and RASA1 (via SH2 domain). Methylated. In terms of processing, tyrosine phosphorylated by FYN, PTK6 and SRC. Tyrosine phosphorylated by SRC during mitosis. In terms of tissue distribution, expressed in heart, skin, brain, colon, spleen, kidney, cervix and testis. In adult cerebellum expressed predominantly in Purkinje cells and in the hippocampus is abundantly expressed in glutamatergic dentate granule cells and in specific inhibitory Schaffer collateral-associated and path-associated interneurons; expression is restricted to neuronal subpopulations largely non-overlapping with expression of KHDRBS3/SLM-2 (at protein level).

Its subcellular location is the nucleus. Its function is as follows. RNA-binding protein that plays a role in the regulation of alternative splicing and influences mRNA splice site selection and exon inclusion. Binds both poly(A) and poly(U) homopolymers. Phosphorylation by PTK6 inhibits its RNA-binding ability. Induces an increased concentration-dependent incorporation of exon in CD44 pre-mRNA by direct binding to purine-rich exonic enhancer. Can regulate alternative splicing of neurexins NRXN1-3 in the laminin G-like domain 6 containing the evolutionary conserved neurexin alternative spliced segment 4 (AS4) involved in neurexin selective targeting to postsynaptic partners. Regulates cell-type specific alternative splicing of NRXN1 at AS4 and acts synergystically with SAM68 in exon skipping. In contrast acts antagonistically with SAM68 in NRXN3 exon skipping at AS4. Its phosphorylation by FYN inhibits its ability to regulate splice site selection. May function as an adapter protein for Src kinases during mitosis. The chain is KH domain-containing, RNA-binding, signal transduction-associated protein 2 (Khdrbs2) from Mus musculus (Mouse).